We begin with the raw amino-acid sequence, 390 residues long: Neutrophil cytosol factor 1 (390 aa).

Positions 4–125 constitute a PX domain; it reads TFIRHIALLG…DFFKVRPDDL (122 aa). SH3 domains follow at residues 156–215 and 226–285; these read IILQ…PLDS and YAGE…KSGQ. The interval 285-390 is disordered; sequence QDVSQAQRQI…STKRKLASAV (106 aa). Residues Ser303 and Ser304 each carry the phosphoserine modification. Positions 309–318 are enriched in basic residues; sequence HSIHQRSRKR. 4 positions are modified to phosphoserine: Ser320, Ser328, Ser345, and Ser348.

In terms of assembly, component of the phagocyte NADPH oxidase complex composed of an obligatory core heterodimer formed by the membrane proteins CYBA and CYBB and the cytosolic regulatory subunits NCF1/p47-phox, NCF2/p67-phox, NCF4/p40-phox and the small GTPase RAC1 or RAC2. Part of a cytosolic complex composed at least by NCF1, NCF2 and NCF4. Interacts (via C-terminus) with NCF2 (via the C-terminal SH3 domain). Interacts with NCF4. Interacts with CYBB. Interacts (via the second SH3 domain) with CYBA; interaction is phosphorylation-dependent. Interacts with NOXA1. Interacts with ADAM15. Interacts with TRAF4. Interacts with FASLG. Interacts with PARK7 (via C-terminus); the interaction is enhanced by LPS and modulates NCF1 phosphorylation and membrane translocation. Post-translationally, phosphorylated by PRKCD; phosphorylation induces activation of NCF1, leading to assembly and activation of the NADPH oxidase complex. As to expression, detected in peripheral blood monocytes and neutrophils (at protein level).

It localises to the cytoplasm. The protein resides in the cytosol. The protein localises to the membrane. Its function is as follows. Subunit of the phagocyte NADPH oxidase complex that mediates the transfer of electrons from cytosolic NADPH to O2 to produce the superoxide anion (O2(-)). In the activated complex, electrons are first transferred from NADPH to flavin adenine dinucleotide (FAD) and subsequently transferred via two heme molecules to molecular oxygen, producing superoxide through an outer-sphere reaction. Activation of the NADPH oxidase complex is initiated by the assembly of cytosolic subunits of the NADPH oxidase complex with the core NADPH oxidase complex to form a complex at the plasma membrane or phagosomal membrane. This activation process is initiated by phosphorylation dependent binding of the cytosolic NCF1/p47-phox subunit to the C-terminus of CYBA/p22-phox. This is Neutrophil cytosol factor 1 from Homo sapiens (Human).